A 74-amino-acid polypeptide reads, in one-letter code: Protein SlyX homolog (74 aa).

Belongs to the SlyX family.

This chain is Protein SlyX homolog, found in Neisseria meningitidis serogroup C / serotype 2a (strain ATCC 700532 / DSM 15464 / FAM18).